Here is a 189-residue protein sequence, read N- to C-terminus: Large ribosomal subunit protein bL9 (189 aa).

This sequence belongs to the bacterial ribosomal protein bL9 family.

Functionally, binds to the 23S rRNA. The polypeptide is Large ribosomal subunit protein bL9 (Methylobacterium nodulans (strain LMG 21967 / CNCM I-2342 / ORS 2060)).